An 852-amino-acid chain; its full sequence is Transient receptor potential cation channel subfamily V member 4 (852 aa).

The Cytoplasmic segment spans residues 1-455 (MADPEDPRDA…RDKWRKFGAV (455 aa)). Residues 30–51 (VEDTPSPAEPSRGPPGAVDGKQ) form a disordered region. ATP contacts are provided by residues Lys178, Lys183, Asn187, 222–225 (YRGQ), and Arg234. ANK repeat units lie at residues 223–252 (RGQT…DVHA) and 270–299 (FGEL…KQAD). Residues 235-237 (RCK), 282-285 (NQPH), and Lys330 each bind a 1,2-diacyl-sn-glycero-3-phospho-(1D-myo-inositol-4,5-bisphosphate). One copy of the ANK 3 repeat lies at 355–387 (DGLSPLMMAAKTGKIGIFQHIIRREIADEDVRH). The chain crosses the membrane as a helical span at residues 456-476 (SFYISVVSYLCAMIIFTLIAY). Topologically, residues 477–493 (YRPMEGPPPYPYTTTID) are extracellular. The helical transmembrane segment at 494 to 520 (YLRLAGEIITLLTGILFFFSNIKDLFM) threads the bilayer. At 521–533 (KKCPGVNSFFIDG) the chain is on the cytoplasmic side. The chain crosses the membrane as a helical span at residues 534–554 (SFQLLYFIYSVLVIVTAGLYL). At 555 to 558 (GGVE) the chain is on the extracellular side. A helical transmembrane segment spans residues 559-579 (AYLAVMVFALVLGWMNALYFT). The Cytoplasmic segment spans residues 580–594 (RGLKLTGTYSIMIQK). Residues 595–622 (ILFKDLFRFLLVYLLFMIGYASALVSLL) traverse the membrane as a helical segment. Residues 623-651 (NPCPSSESCSEDHSNCTLPTYPSCRDSQT) are Extracellular-facing. An intramembrane region (pore-forming) is located at residues 652–671 (FSTFLLDLFKLTIGMGDLEM). The Selectivity filter signature appears at 665 to 668 (GMGD). Ca(2+) is bound at residue Asp668. Residues 672-679 (LESAKYPG) are Extracellular-facing. A helical membrane pass occupies residues 680–708 (VFIILLVTYIILTFVLLLNMLIALMGETV). Topologically, residues 709 to 852 (GQVSKESKHI…RHGQTPSSPL (144 aa)) are cytoplasmic.

This sequence belongs to the transient receptor (TC 1.A.4) family. TrpV subfamily. TRPV4 sub-subfamily. In terms of assembly, homotetramer. Interacts with Ca(2+)-calmodulin.

The protein localises to the apical cell membrane. Its subcellular location is the cell junction. It localises to the adherens junction. It carries out the reaction Ca(2+)(in) = Ca(2+)(out). ATP binding enhances channel sensitivity to agonists. Ca(2+)-calmodulin prevents the ATP-mediated increased sensitivity to agonists. In terms of biological role, non-selective calcium permeant cation channel involved in osmotic sensitivity and mechanosensitivity. Activation by exposure to hypotonicity within the physiological range exhibits an outward rectification. Also activated by phorbol esters. Channel activity seems to be regulated by a calmodulin-dependent mechanism. The sequence is that of Transient receptor potential cation channel subfamily V member 4 (TRPV4) from Gallus gallus (Chicken).